We begin with the raw amino-acid sequence, 128 residues long: Large ribosomal subunit protein bL12 (128 aa).

It belongs to the bacterial ribosomal protein bL12 family. Homodimer. Part of the ribosomal stalk of the 50S ribosomal subunit. Forms a multimeric L10(L12)X complex, where L10 forms an elongated spine to which 2 to 4 L12 dimers bind in a sequential fashion. Binds GTP-bound translation factors.

Its function is as follows. Forms part of the ribosomal stalk which helps the ribosome interact with GTP-bound translation factors. Is thus essential for accurate translation. The chain is Large ribosomal subunit protein bL12 from Brachyspira hyodysenteriae (strain ATCC 49526 / WA1).